The following is a 75-amino-acid chain: Chaplin-D (75 aa).

The N-terminal stretch at 1–23 (MKKSAAVVAGAIMALGMAAPAFA) is a signal peptide. The region spanning 34-74 (SPGVLSGNVIQVPVHVPVNVCGNSINVVGLLNPAFGNKCEN) is the Chaplin domain. An intrachain disulfide couples C54 to C72.

The protein belongs to the chaplin family. Short chaplin subfamily.

The protein localises to the cell surface. It localises to the secreted. Its subcellular location is the cell wall. It is found in the fimbrium. One of 8 partially redundant surface-active proteins required for efficient formation of aerial mycelium; the short chaplins assemble into a hydrophobic, amyloidal fibrillar surface layer that envelopes and protects aerial hyphae and spores, presumably anchored to the long chaplins. Chaplins have an overlapping function with the surface-active SapB peptide; chaplins are essential on minimal medium while on rich medium both chaplins and SapB are required for efficient aerial hyphae formation. Chaplins are also involved in cell attachment to a hydrophobic surface. Forms amyloid fibrils in vitro probably composed of stacked beta-sheets, at low extracellular concentrations individually restores the ability to form aerial hyphae to a chaplin-deficient strain. A small chaplin extract (ChpD, ChpE, ChpF, ChpG and ChpH) self-assembles into 2 different amyloids; small fibrils at the air-water interface form an amphipathic membrane that resembles spore-surface structures involved in aerial hyphae formation, and hydrophilic fibrils in solution that resemble the fibers that attach cells to a hydrophobic surface. At the air-water interface the hydrophilic surface is in contact with water (probably equivalent to the peptidoglycan layer), while the hydrophobic face is exposed to the air, making the surface of the aerial hyphae hydrophobic. A minimal chaplin strain capable of forming aerial mycelium/hyphae on minimal medium contains ChpC, ChpE and ChpH. The strain also has restored rodlet formation on the hyphae surface. A second minimal chaplin strain with ChpA, ChpD and ChpE makes slightly less robust hyphae. A small chaplin extract applied to a chaplin-deficient strain restores aerial hyphae formation. The small chaplin extract forms an amyloid-like structure similar to that seen on the surface of cells without rodlets (rdlA-rdlB deletions), and is highly surface active, reducing surface tension from 72 to 26 mJ/m(2), which probably allows escape of hyphae from an aqueous environment into air. The chain is Chaplin-D from Streptomyces coelicolor (strain ATCC BAA-471 / A3(2) / M145).